Consider the following 231-residue polypeptide: GSK-3-binding protein FRAT2 (231 aa).

Disordered regions lie at residues 1–24 (MPCR…DDSF) and 53–109 (DTAH…PGAV). Residues 7 to 23 (EEEEAGDEAEGEEDDDS) are compositionally biased toward acidic residues. The tract at residues 172 to 194 (DPHRLLQQLVLSGNLIKEAVRRL) is involved in GSK-3 binding. Positions 203 to 231 (ATSPASAPGSGGGRSGPDSVTLQPSGAWL) are disordered.

This sequence belongs to the GSK-3-binding protein family. As to quaternary structure, binds GSK-3 and prevents GSK-3-dependent phosphorylation.

Functionally, positively regulates the Wnt signaling pathway by stabilizing beta-catenin through the association with GSK-3. This is GSK-3-binding protein FRAT2 (Frat2) from Mus musculus (Mouse).